A 445-amino-acid chain; its full sequence is Phosphoglucosamine mutase (445 aa).

Catalysis depends on serine 99, which acts as the Phosphoserine intermediate. Mg(2+)-binding residues include serine 99, aspartate 242, aspartate 244, and aspartate 246. Phosphoserine is present on serine 99.

This sequence belongs to the phosphohexose mutase family. Requires Mg(2+) as cofactor. Activated by phosphorylation.

It catalyses the reaction alpha-D-glucosamine 1-phosphate = D-glucosamine 6-phosphate. In terms of biological role, catalyzes the conversion of glucosamine-6-phosphate to glucosamine-1-phosphate. This chain is Phosphoglucosamine mutase, found in Helicobacter pylori (strain HPAG1).